Here is a 288-residue protein sequence, read N- to C-terminus: Proteasome assembly chaperone 1 (288 aa).

Residues 1 to 33 (MATFFGEVQSVFSRAVDEEEEDEDDDEEEEEDR) are disordered. The span at 17 to 33 (DEEEEDEDDDEEEEEDR) shows a compositional bias: acidic residues.

This sequence belongs to the PSMG1 family. As to quaternary structure, forms a heterodimer with psmg2. Degraded by the proteasome upon completion of 20S proteasome maturation.

The protein resides in the cytoplasm. Its subcellular location is the endoplasmic reticulum. Its function is as follows. Chaperone protein which promotes assembly of the 20S proteasome as part of a heterodimer with psmg2. In Xenopus laevis (African clawed frog), this protein is Proteasome assembly chaperone 1.